A 1678-amino-acid chain; its full sequence is Serine/threonine-protein kinase pakD (1678 aa).

The span at 1-15 (MSRLQPQQQQRGRSS) shows a compositional bias: low complexity. Disordered regions lie at residues 1–73 (MSRL…NNKF), 180–224 (NSNS…PNKN), 262–428 (QLSS…NNNN), and 442–489 (KRKS…SQSS). Residues 17 to 34 (FKDNFQIQKPLQSLTPSE) show a composition bias toward polar residues. Low complexity-rich tracts occupy residues 35–73 (QQQQ…NNKF) and 180–214 (NSNS…NNNN). In terms of domain architecture, Calponin-homology (CH) spans 82-189 (KNVENDIKKW…NSNSSKTTTN (108 aa)). Residues 215–224 (RAIITSPNKN) show a composition bias toward polar residues. 2 stretches are compositionally biased toward low complexity: residues 276–359 (NNNN…NINN) and 399–428 (NNNN…NNNN). Residues 460–472 (DSSDSSDSSDSDS) are compositionally biased toward acidic residues. 2 coiled-coil regions span residues 512–542 (KQDK…KKLL) and 570–628 (TRQI…YANT). 3 stretches are compositionally biased toward low complexity: residues 631–654 (SSNS…INGS), 662–671 (NSSTSKGTLS), and 695–713 (NSHQ…QTTS). Disordered regions lie at residues 631–672 (SSNS…TLSR) and 693–722 (PVNS…ASYN). Positions 752-862 (VSATLQQKQQ…QNQQINNLID (111 aa)) form a coiled coil. The Phorbol-ester/DAG-type zinc finger occupies 1141 to 1197 (PHSFVLKSFRIISECNYCRQYIWGVRGIVAREAFECVGCKYKTHKKCLKEASEKTFC). One can recognise a CRIB domain in the interval 1202–1215 (VGAPFNVKHEMHVG). Disordered regions lie at residues 1267–1292 (LTNN…QQNQ) and 1323–1346 (NNTY…PNNN). A coiled-coil region spans residues 1269 to 1309 (NNSNNNNNNNNSNNNLQQQQQQNQQLKQKLNITNNQQNNTI). A Protein kinase domain is found at 1376 to 1647 (YKVREVVGGG…AHYLLRHPFL (272 aa)). ATP-binding positions include 1382–1390 (VGGGSTGKV) and lysine 1405. The active-site Proton acceptor is aspartate 1515.

The protein belongs to the protein kinase superfamily. STE Ser/Thr protein kinase family. STE20 subfamily. The cofactor is Mg(2+).

It catalyses the reaction L-seryl-[protein] + ATP = O-phospho-L-seryl-[protein] + ADP + H(+). The enzyme catalyses L-threonyl-[protein] + ATP = O-phospho-L-threonyl-[protein] + ADP + H(+). In Dictyostelium discoideum (Social amoeba), this protein is Serine/threonine-protein kinase pakD.